A 362-amino-acid polypeptide reads, in one-letter code: Protein RecA (362 aa).

77–84 is an ATP binding site; it reads GPESSGKT.

It belongs to the RecA family.

It is found in the cytoplasm. In terms of biological role, can catalyze the hydrolysis of ATP in the presence of single-stranded DNA, the ATP-dependent uptake of single-stranded DNA by duplex DNA, and the ATP-dependent hybridization of homologous single-stranded DNAs. It interacts with LexA causing its activation and leading to its autocatalytic cleavage. The polypeptide is Protein RecA (Rhizobium etli (strain CIAT 652)).